The chain runs to 142 residues: MTTAIQYQVIPLADREHSNKVASILENKYKTATNKRITLNERFGVLEKGYTIQATEPETVKNDSDVFFVVHDRNLNSKKEFVENYLAKNPIVNSPEKVFEEEDKENAPTKKAVLKPSSTDEKKLTSSDIYIQEITRSILQSV.

Residues 97–123 (KVFEEEDKENAPTKKAVLKPSSTDEKK) form a disordered region.

Component of the tost-1 variant of the PETISCO complex (also called the pid-3, erh-2, tofu-6, and ife-3 small RNA complex) containing at least tost-1, tofu-6, ife-3, pid-3, and erh-2, which plays an essential role in embryogenesis. Within the complex interacts with erh-2. Within the complex interacts with pid-3 and tofu-6. In contrast to the pid-1 variant of the PETISCO complex, the tost-1 variant of the PETISCO complex plays a minor role in the biogenesis of a class of 21 nucleotide PIWI-interacting RNAs (piRNAs) that possess a uracil residue at the 5'-end (also called 21U-RNAs). As to expression, expressed in the germline.

It localises to the cytoplasm. Its subcellular location is the nucleus. In terms of biological role, component of the tost-1 variant of the PETISCO complex which plays an essential role in embryogenesis. Within the complex acts as an adapter which binds to the complex via erh-2. Does not seem to play a role in the biogenesis of a class of 21 nucleotide PIWI-interacting RNAs (piRNAs) that possess a uracil residue at the 5'-end (also called 21U-RNAs). May inhibit 21U-RNA accumulation. Required for chromosome segregation and cell division in early embryos. The polypeptide is Protein tost-1 (Caenorhabditis elegans).